Here is a 176-residue protein sequence, read N- to C-terminus: Inorganic pyrophosphatase (176 aa).

Positions 30, 44, and 56 each coordinate substrate. Mg(2+) is bound by residues Asp66, Asp71, and Asp103. Tyr142 contacts substrate.

The protein belongs to the PPase family. As to quaternary structure, homohexamer. Requires Mg(2+) as cofactor.

The protein localises to the cytoplasm. It carries out the reaction diphosphate + H2O = 2 phosphate + H(+). Its function is as follows. Catalyzes the hydrolysis of inorganic pyrophosphate (PPi) forming two phosphate ions. The protein is Inorganic pyrophosphatase of Escherichia coli O157:H7.